A 264-amino-acid chain; its full sequence is NADH dehydrogenase [ubiquinone] iron-sulfur protein 3, mitochondrial (264 aa).

Residues 1 to 36 (MAAAAVARLWWRGILGASALTRGTGRPSVLLLPVRR) constitute a mitochondrion transit peptide.

This sequence belongs to the complex I 30 kDa subunit family. As to quaternary structure, core subunit of respiratory chain NADH dehydrogenase (Complex I) which is composed of 45 different subunits. Interacts with NDUFAF3. Interacts with RAB5IF. Found in subcomplexes containing subunits NDUFS2, MT-ND1 and NDUFA13.

Its subcellular location is the mitochondrion inner membrane. It catalyses the reaction a ubiquinone + NADH + 5 H(+)(in) = a ubiquinol + NAD(+) + 4 H(+)(out). In terms of biological role, core subunit of the mitochondrial membrane respiratory chain NADH dehydrogenase (Complex I) which catalyzes electron transfer from NADH through the respiratory chain, using ubiquinone as an electron acceptor. Essential for the catalytic activity and assembly of complex I. In Homo sapiens (Human), this protein is NADH dehydrogenase [ubiquinone] iron-sulfur protein 3, mitochondrial (NDUFS3).